The following is a 162-amino-acid chain: MNISATARSLLLSEFVSAFFLAMRYFFQPKPTLNYPFEKGPISPRFRGEHALRRYPNGEERCIACKLCEAVCPAQAITIEAGPRRNDGTRRTVRYDIDMVKCIYCGLCQEACPVDAIVEGPNFEFATETREELYYDKAKLLANGDRWEREISKAIALDAPYR.

2 4Fe-4S ferredoxin-type domains span residues 52–82 (LRRY…IEAG) and 93–122 (VRYD…EGPN). 8 residues coordinate [4Fe-4S] cluster: cysteine 62, cysteine 65, cysteine 68, cysteine 72, cysteine 102, cysteine 105, cysteine 108, and cysteine 112.

The protein belongs to the complex I 23 kDa subunit family. In terms of assembly, NDH-1 is composed of 14 different subunits. Subunits NuoA, H, J, K, L, M, N constitute the membrane sector of the complex. Requires [4Fe-4S] cluster as cofactor.

The protein resides in the cell inner membrane. The enzyme catalyses a quinone + NADH + 5 H(+)(in) = a quinol + NAD(+) + 4 H(+)(out). Its function is as follows. NDH-1 shuttles electrons from NADH, via FMN and iron-sulfur (Fe-S) centers, to quinones in the respiratory chain. The immediate electron acceptor for the enzyme in this species is believed to be ubiquinone. Couples the redox reaction to proton translocation (for every two electrons transferred, four hydrogen ions are translocated across the cytoplasmic membrane), and thus conserves the redox energy in a proton gradient. The sequence is that of NADH-quinone oxidoreductase subunit I from Bradyrhizobium sp. (strain BTAi1 / ATCC BAA-1182).